A 442-amino-acid polypeptide reads, in one-letter code: Glutamate synthase large subunit-like protein (442 aa).

The interval L108 to H133 is disordered. Residues G109–T121 are compositionally biased toward low complexity.

This sequence belongs to the glutamate synthase family.

The polypeptide is Glutamate synthase large subunit-like protein (glxD) (Rhizobium meliloti (strain 1021) (Ensifer meliloti)).